We begin with the raw amino-acid sequence, 339 residues long: Anthranilate phosphoribosyltransferase (339 aa).

5-phospho-alpha-D-ribose 1-diphosphate-binding positions include glycine 81, 84 to 85 (GD), serine 89, 91 to 94 (NVSS), 109 to 117 (KHGNRALSS), and alanine 121. Residue glycine 81 participates in anthranilate binding. Serine 93 provides a ligand contact to Mg(2+). An anthranilate-binding site is contributed by asparagine 112. Arginine 167 provides a ligand contact to anthranilate. 2 residues coordinate Mg(2+): aspartate 225 and glutamate 226.

Belongs to the anthranilate phosphoribosyltransferase family. In terms of assembly, homodimer. Mg(2+) serves as cofactor.

The catalysed reaction is N-(5-phospho-beta-D-ribosyl)anthranilate + diphosphate = 5-phospho-alpha-D-ribose 1-diphosphate + anthranilate. It functions in the pathway amino-acid biosynthesis; L-tryptophan biosynthesis; L-tryptophan from chorismate: step 2/5. In terms of biological role, catalyzes the transfer of the phosphoribosyl group of 5-phosphorylribose-1-pyrophosphate (PRPP) to anthranilate to yield N-(5'-phosphoribosyl)-anthranilate (PRA). The sequence is that of Anthranilate phosphoribosyltransferase from Brucella suis (strain ATCC 23445 / NCTC 10510).